Reading from the N-terminus, the 312-residue chain is DNA-directed RNA polymerase subunit alpha (312 aa).

An alpha N-terminal domain (alpha-NTD) region spans residues 1 to 229 (MLQYQIDRIE…ELFQPLATVT (229 aa)). The alpha C-terminal domain (alpha-CTD) stretch occupies residues 236 to 312 (IEPEPSAEAQ…ISIPQSRTSV (77 aa)).

Belongs to the RNA polymerase alpha chain family. In cyanobacteria the RNAP catalytic core is composed of 2 alpha, 1 beta, 1 beta', 1 gamma and 1 omega subunit. When a sigma factor is associated with the core the holoenzyme is formed, which can initiate transcription.

The enzyme catalyses RNA(n) + a ribonucleoside 5'-triphosphate = RNA(n+1) + diphosphate. In terms of biological role, DNA-dependent RNA polymerase catalyzes the transcription of DNA into RNA using the four ribonucleoside triphosphates as substrates. This is DNA-directed RNA polymerase subunit alpha from Synechococcus sp. (strain CC9311).